The following is an 847-amino-acid chain: Leucine--tRNA ligase (847 aa).

The 'HIGH' region motif lies at 39–49 (PYPSGALHMGH). The short motif at 613-617 (KMSKS) is the 'KMSKS' region element. K616 lines the ATP pocket.

It belongs to the class-I aminoacyl-tRNA synthetase family.

It is found in the cytoplasm. It carries out the reaction tRNA(Leu) + L-leucine + ATP = L-leucyl-tRNA(Leu) + AMP + diphosphate. In Gloeobacter violaceus (strain ATCC 29082 / PCC 7421), this protein is Leucine--tRNA ligase.